The chain runs to 455 residues: T-box protein VegT (455 aa).

Residues 57-230 (LWAQFHQEGT…HNPFAKGFRE (174 aa)) constitute a DNA-binding region (T-box). Residues 229-241 (REQERSHKRDDVL) show a composition bias toward basic and acidic residues. Disordered stretches follow at residues 229 to 276 (REQE…RVKE) and 295 to 360 (ANQG…PDSD). Residues 308 to 326 (GANQEQQVPSSSSNFYNRN) are compositionally biased toward polar residues.

In terms of assembly, forms a repression complex on the promoters of the nodal/nr1 and siamois genes with the maternal factors tcf7l1/tcf3 and pouf5.1/oct-25. Interacts (via C-terminus) with tcf7l1/tcf3 (via N-terminus). Also interacts with the other POU-domain transcription factors pou5f1.2/oct-91 and pou5f1.3/oct-60. As to expression, vegetally localized in oocytes and expressed in the presumptive endoderm and mesoderm at early gastrula stage. Expression is down-regulated in the endoderm by the end of gastrulation but maintained in the lateral and ventral mesoderm of the blastopore lip.

It is found in the nucleus. Transcription factor required for both mesoderm and endoderm formation in the embryo; signaling determinants and concentration levels may determine which germ layer is formed. Acts together with beta-catenin to activate genes that are responsible for mesoderm induction including wnt-8, eomes t/bra, siamois, mix1 and sox17. Directly binds to promoter DNA. Patterns the mesoderm along the dorsoventral and posterior axis. Activates siamois gene transcription when alone or in combination with beta-catenin, but inhibits siamois transcription in combination with pou5f1.1/oct-25. This Xenopus tropicalis (Western clawed frog) protein is T-box protein VegT.